The sequence spans 346 residues: tRNA N6-adenosine threonylcarbamoyltransferase (346 aa).

Positions 111 and 115 each coordinate Fe cation. Substrate is bound by residues 134–138 (LVSGG), Asp167, Gly180, and Asn279. A Fe cation-binding site is contributed by Asp307.

The protein belongs to the KAE1 / TsaD family. The cofactor is Fe(2+).

The protein localises to the cytoplasm. It catalyses the reaction L-threonylcarbamoyladenylate + adenosine(37) in tRNA = N(6)-L-threonylcarbamoyladenosine(37) in tRNA + AMP + H(+). In terms of biological role, required for the formation of a threonylcarbamoyl group on adenosine at position 37 (t(6)A37) in tRNAs that read codons beginning with adenine. Is involved in the transfer of the threonylcarbamoyl moiety of threonylcarbamoyl-AMP (TC-AMP) to the N6 group of A37, together with TsaE and TsaB. TsaD likely plays a direct catalytic role in this reaction. The polypeptide is tRNA N6-adenosine threonylcarbamoyltransferase (Burkholderia vietnamiensis (strain G4 / LMG 22486) (Burkholderia cepacia (strain R1808))).